Here is a 202-residue protein sequence, read N- to C-terminus: Superoxide dismutase [Fe] (202 aa).

Fe cation is bound by residues H27, H82, D164, and H168.

The protein belongs to the iron/manganese superoxide dismutase family. In terms of assembly, homodimer. Requires Fe cation as cofactor.

The enzyme catalyses 2 superoxide + 2 H(+) = H2O2 + O2. In terms of biological role, destroys superoxide anion radicals which are normally produced within the cells and which are toxic to biological systems. The chain is Superoxide dismutase [Fe] (sodA) from Enterococcus faecalis (strain ATCC 700802 / V583).